The chain runs to 232 residues: MNKAVVVFSGGQDSTTCLVKALNEFDEVHAITFDYGQRHRLEIEVAQNLAKELGVAAHKVMDVTLLNELAISSLTRDDIPVSHELQENGLPNSFVPGRNILFLTLAGIYAYQIGAETIITGVCETDFSGYPDCRDDFVKAMNSALVKGMDKPLVIQTPLMWLNKAETWALADQNNALQLVREKTLTCYNGIVGDGCGDCPSCHLRKVGLNDYLDNREAIMASLVEKQHAESK.

F8–L18 is an ATP binding site. Residues C187, C196, C199, and C202 each coordinate Zn(2+).

The protein belongs to the QueC family. The cofactor is Zn(2+).

The enzyme catalyses 7-carboxy-7-deazaguanine + NH4(+) + ATP = 7-cyano-7-deazaguanine + ADP + phosphate + H2O + H(+). It functions in the pathway purine metabolism; 7-cyano-7-deazaguanine biosynthesis. Its function is as follows. Catalyzes the ATP-dependent conversion of 7-carboxy-7-deazaguanine (CDG) to 7-cyano-7-deazaguanine (preQ(0)). This is 7-cyano-7-deazaguanine synthase from Vibrio vulnificus (strain YJ016).